Here is a 1220-residue protein sequence, read N- to C-terminus: DNA polymerase catalytic subunit (1220 aa).

Disordered stretches follow at residues 21-43 (GKRP…RPPQ) and 641-691 (QADA…KPGV). Polar residues predominate over residues 646 to 660 (SETSELAMDSQSHAF).

It belongs to the DNA polymerase type-B family. In terms of assembly, forms a complex with the ssDNA-binding protein, the DNA polymerase processivity factor, and the alkaline exonuclease. Interacts with the helicase-primase complex composed of the primase, the helicase and the primase-associated factor; this interaction may coordinate leading and lagging strand DNA synthesis at the replication fork.

The protein localises to the host nucleus. It carries out the reaction DNA(n) + a 2'-deoxyribonucleoside 5'-triphosphate = DNA(n+1) + diphosphate. The enzyme catalyses Endonucleolytic cleavage to 5'-phosphomonoester.. Functionally, replicates viral genomic DNA. The replication complex is composed of six viral proteins: the DNA polymerase, processivity factor, primase, primase-associated factor, helicase, and ssDNA-binding protein. Additionally, the polymerase contains an intrinsic ribonuclease H (RNase H) activity that specifically degrades RNA/DNA heteroduplexes or duplex DNA substrates in the 5' to 3' direction. Therefore, it can catalyze the excision of the RNA primers that initiate the synthesis of Okazaki fragments at a replication fork during viral DNA replication. The protein is DNA polymerase catalytic subunit of Equine herpesvirus 1 (strain Ab4p) (EHV-1).